A 549-amino-acid polypeptide reads, in one-letter code: Glucose-6-phosphate isomerase (549 aa).

E355 functions as the Proton donor in the catalytic mechanism. Residues H387 and K515 contribute to the active site.

Belongs to the GPI family.

It localises to the cytoplasm. The enzyme catalyses alpha-D-glucose 6-phosphate = beta-D-fructose 6-phosphate. It functions in the pathway carbohydrate biosynthesis; gluconeogenesis. The protein operates within carbohydrate degradation; glycolysis; D-glyceraldehyde 3-phosphate and glycerone phosphate from D-glucose: step 2/4. Its function is as follows. Catalyzes the reversible isomerization of glucose-6-phosphate to fructose-6-phosphate. The protein is Glucose-6-phosphate isomerase of Haemophilus influenzae (strain PittEE).